Consider the following 663-residue polypeptide: Nuclear receptor-binding protein homolog (663 aa).

Residues 1-14 show a composition bias toward low complexity; that stretch reads MSNSQANAGSSGSA. The interval 1 to 112 is disordered; that stretch reads MSNSQANAGS…SEDESEILEE (112 aa). The segment covering 19-46 has biased composition (polar residues); it reads LNPSGSATLVPNLTTTNASSQATPASTI. Low complexity-rich tracts occupy residues 47-57 and 81-94; these read PQQQQPQQSQP and VVVAGGSEGVNLDS. Residues 101–111 show a composition bias toward acidic residues; the sequence is DDSEDESEILE. The Protein kinase domain occupies 122–392; the sequence is REEVDQRDVP…ANDLLFHPLL (271 aa). 2 disordered regions span residues 481–505 and 638–663; these read PNFRSRAASPERADSVKSATPEPVD and YVPQDQQQYQQQQQEADVDQSGTTSN. A phosphoserine mark is found at Ser-489, Ser-495, and Ser-498. Thr-500 bears the Phosphothreonine mark. Over residues 641-652 the composition is skewed to low complexity; sequence QDQQQYQQQQQE.

The protein belongs to the protein kinase superfamily. Ser/Thr protein kinase family.

Its subcellular location is the cytoplasm. It localises to the cell cortex. In terms of biological role, may play a role in subcellular trafficking between the endoplasmic reticulum and Golgi apparatus. This chain is Nuclear receptor-binding protein homolog, found in Drosophila pseudoobscura pseudoobscura (Fruit fly).